The chain runs to 205 residues: Protein-L-isoaspartate O-methyltransferase (205 aa).

Residue Ser56 is part of the active site.

It belongs to the methyltransferase superfamily. L-isoaspartyl/D-aspartyl protein methyltransferase family.

The protein localises to the cytoplasm. The catalysed reaction is [protein]-L-isoaspartate + S-adenosyl-L-methionine = [protein]-L-isoaspartate alpha-methyl ester + S-adenosyl-L-homocysteine. Functionally, catalyzes the methyl esterification of L-isoaspartyl residues in peptides and proteins that result from spontaneous decomposition of normal L-aspartyl and L-asparaginyl residues. It plays a role in the repair and/or degradation of damaged proteins. This Aeromonas hydrophila subsp. hydrophila (strain ATCC 7966 / DSM 30187 / BCRC 13018 / CCUG 14551 / JCM 1027 / KCTC 2358 / NCIMB 9240 / NCTC 8049) protein is Protein-L-isoaspartate O-methyltransferase.